Here is a 626-residue protein sequence, read N- to C-terminus: Probable metalloendopeptidase G1-type (626 aa).

His42 contributes to the Zn(2+) binding site. The active site involves Glu45. Residue His46 participates in Zn(2+) binding.

This sequence belongs to the peptidase M44 family. Requires Zn(2+) as cofactor.

Its function is as follows. Seems to be involved in viral proteins maturation by cleavage at Ala-Gly-|-Xaa motifs. The chain is Probable metalloendopeptidase G1-type from Fowlpox virus (strain NVSL) (FPV).